A 138-amino-acid polypeptide reads, in one-letter code: DNA-directed RNA polymerase subunit omega (138 aa).

Positions Ala-101–Asp-138 are disordered. Positions Asp-119 to Asp-138 are enriched in acidic residues.

Belongs to the RNA polymerase subunit omega family. As to quaternary structure, the RNAP catalytic core consists of 2 alpha, 1 beta, 1 beta' and 1 omega subunit. When a sigma factor is associated with the core the holoenzyme is formed, which can initiate transcription.

It carries out the reaction RNA(n) + a ribonucleoside 5'-triphosphate = RNA(n+1) + diphosphate. Its function is as follows. Promotes RNA polymerase assembly. Latches the N- and C-terminal regions of the beta' subunit thereby facilitating its interaction with the beta and alpha subunits. This chain is DNA-directed RNA polymerase subunit omega, found in Rhodospirillum rubrum (strain ATCC 11170 / ATH 1.1.1 / DSM 467 / LMG 4362 / NCIMB 8255 / S1).